A 114-amino-acid polypeptide reads, in one-letter code: Large ribosomal subunit protein uL22 (114 aa).

Belongs to the universal ribosomal protein uL22 family. Part of the 50S ribosomal subunit.

Its function is as follows. This protein binds specifically to 23S rRNA; its binding is stimulated by other ribosomal proteins, e.g. L4, L17, and L20. It is important during the early stages of 50S assembly. It makes multiple contacts with different domains of the 23S rRNA in the assembled 50S subunit and ribosome. Functionally, the globular domain of the protein is located near the polypeptide exit tunnel on the outside of the subunit, while an extended beta-hairpin is found that lines the wall of the exit tunnel in the center of the 70S ribosome. The protein is Large ribosomal subunit protein uL22 of Mycoplasmopsis agalactiae (strain NCTC 10123 / CIP 59.7 / PG2) (Mycoplasma agalactiae).